The sequence spans 808 residues: Phospholipase D alpha 1 (808 aa).

Residues 1–30 (MAQISLHGTLHVTIYEVDKLHSGGGPHFFR) constitute a propeptide that is removed on maturation. Residues 1–125 (MAQISLHGTL…LDGEEIDRWV (125 aa)) form the C2 domain. Residue aspartate 186 coordinates Ca(2+). Residues 326-364 (TMFTHHQKIVVVDSAMPNGDSQRRRIVSFVGGLDLCDGR) form the PLD phosphodiesterase 1 domain. Catalysis depends on residues histidine 331, lysine 333, and aspartate 338. Position 331 (histidine 331) interacts with a 1,2-diacyl-sn-glycero-3-phosphate. Positions 370 and 404 each coordinate Ca(2+). The a 1,2-diacyl-sn-glycero-3-phosphate site is built by glutamine 520 and histidine 659. A PLD phosphodiesterase 2 domain is found at 654 to 681 (FMIYVHTKMMIVDDEYIIIGSANINQRS). Residues histidine 659, lysine 661, and aspartate 666 contribute to the active site. A Ca(2+)-binding site is contributed by glutamate 720.

The protein belongs to the phospholipase D family. C2-PLD subfamily. Ca(2+) is required as a cofactor. As to expression, expression is higher in radicle than in endosperm.

It is found in the cytoplasm. It localises to the membrane. The protein resides in the vacuole. The protein localises to the endoplasmic reticulum. Its subcellular location is the plastid. It is found in the cell membrane. It carries out the reaction a 1,2-diacyl-sn-glycero-3-phosphocholine + H2O = a 1,2-diacyl-sn-glycero-3-phosphate + choline + H(+). Hydrolyzes glycerol-phospholipids at the terminal phosphodiesteric bond. Plays an important role in various cellular processes, including phytohormone action, vesicular trafficking, secretion, cytoskeletal arrangement, meiosis, tumor promotion, pathogenesis, membrane deterioration and senescence. This chain is Phospholipase D alpha 1 (PLD1), found in Ricinus communis (Castor bean).